Reading from the N-terminus, the 314-residue chain is Secreted frizzled-related protein 1 (314 aa).

The first 31 residues, 1–31, serve as a signal peptide directing secretion; sequence MGVGRSEGGRRGAALGVLLALGVALLAVGSA. Positions 53-169 constitute an FZ domain; that stretch reads TKPHQCVAIP…FPQDYVCIAM (117 aa). 5 cysteine pairs are disulfide-bonded: Cys-58–Cys-121, Cys-68–Cys-114, Cys-105–Cys-140, Cys-129–Cys-166, and Cys-133–Cys-157. Asn-173 is a glycosylation site (N-linked (GlcNAc...) asparagine). 3 cysteine pairs are disulfide-bonded: Cys-186–Cys-256, Cys-189–Cys-258, and Cys-203–Cys-306. The region spanning 186 to 306 is the NTR domain; that stretch reads CPPCDNEMKS…FMKKVKAPDC (121 aa).

This sequence belongs to the secreted frizzled-related protein (sFRP) family.

It localises to the secreted. Soluble frizzled-related proteins (sFRPS) function as modulators of Wnt signaling through direct interaction with Wnts. They have a role in regulating cell growth and differentiation in specific cell types. This is Secreted frizzled-related protein 1 (SFRP1) from Gallus gallus (Chicken).